We begin with the raw amino-acid sequence, 156 residues long: dCTP deaminase (156 aa).

DCTP contacts are provided by residues 79–84 (RSTFAR), D95, Q124, and Y138.

Belongs to the dCTP deaminase family. In terms of assembly, homotrimer.

The enzyme catalyses dCTP + H2O + H(+) = dUTP + NH4(+). It participates in pyrimidine metabolism; dUMP biosynthesis; dUMP from dCTP (dUTP route): step 1/2. Functionally, catalyzes the deamination of dCTP to dUTP. The protein is dCTP deaminase of Thermococcus sibiricus (strain DSM 12597 / MM 739).